The chain runs to 436 residues: Histidinol dehydrogenase (436 aa).

The NAD(+) site is built by Tyr135, Gln197, and Asn220. The substrate site is built by Thr243, Gln265, and His268. Gln265 and His268 together coordinate Zn(2+). Residues Glu334 and His335 each act as proton acceptor in the active site. Positions 335, 368, 422, and 427 each coordinate substrate. Asp368 contacts Zn(2+). His427 contacts Zn(2+).

It belongs to the histidinol dehydrogenase family. The cofactor is Zn(2+).

The catalysed reaction is L-histidinol + 2 NAD(+) + H2O = L-histidine + 2 NADH + 3 H(+). Its pathway is amino-acid biosynthesis; L-histidine biosynthesis; L-histidine from 5-phospho-alpha-D-ribose 1-diphosphate: step 9/9. Its function is as follows. Catalyzes the sequential NAD-dependent oxidations of L-histidinol to L-histidinaldehyde and then to L-histidine. This chain is Histidinol dehydrogenase, found in Deinococcus radiodurans (strain ATCC 13939 / DSM 20539 / JCM 16871 / CCUG 27074 / LMG 4051 / NBRC 15346 / NCIMB 9279 / VKM B-1422 / R1).